The primary structure comprises 138 residues: Transcription factor Atoh7-a (138 aa).

A bHLH domain is found at 33 to 85 (KRRLAANARERRRMQGLNTAFDSLRKVVPQWGEDKQLSKYETLQMALSYIMAL).

It is found in the nucleus. Its subcellular location is the perikaryon. The protein resides in the cell projection. The protein localises to the axon. In terms of biological role, transcription factor that binds to DNA at the consensus sequence 5'-CAG[GC]TG-3'. Positively regulates the determination of retinal ganglion cell fate and formation of the optic nerve and retino-hypothalamic tract. Required for retinal circadian rhythm photoentrainment. Plays a role in brainstem auditory signaling and binaural processing. Regulates the differentiation of olfactory receptor neurons. During retinal neurogenesis, activates the transcription of several genes such as brn3d, coe3, cbfa2t2, glis2, elrC and xgadd45-gamma. This Xenopus laevis (African clawed frog) protein is Transcription factor Atoh7-a.